A 638-amino-acid chain; its full sequence is 1-deoxy-D-xylulose-5-phosphate synthase (638 aa).

Residues H71 and 112 to 114 contribute to the thiamine diphosphate site; that span reads SHA. D144 contacts Mg(2+). Thiamine diphosphate is bound by residues 145-146, N173, Y284, and E365; that span reads GA. Residue N173 coordinates Mg(2+).

This sequence belongs to the transketolase family. DXPS subfamily. In terms of assembly, homodimer. It depends on Mg(2+) as a cofactor. Requires thiamine diphosphate as cofactor.

The enzyme catalyses D-glyceraldehyde 3-phosphate + pyruvate + H(+) = 1-deoxy-D-xylulose 5-phosphate + CO2. It participates in metabolic intermediate biosynthesis; 1-deoxy-D-xylulose 5-phosphate biosynthesis; 1-deoxy-D-xylulose 5-phosphate from D-glyceraldehyde 3-phosphate and pyruvate: step 1/1. Its function is as follows. Catalyzes the acyloin condensation reaction between C atoms 2 and 3 of pyruvate and glyceraldehyde 3-phosphate to yield 1-deoxy-D-xylulose-5-phosphate (DXP). The sequence is that of 1-deoxy-D-xylulose-5-phosphate synthase from Mycobacterium bovis (strain ATCC BAA-935 / AF2122/97).